Reading from the N-terminus, the 862-residue chain is Leucine--tRNA ligase (862 aa).

Residues P49–H59 carry the 'HIGH' region motif. The 'KMSKS' region motif lies at K625–S629. K628 provides a ligand contact to ATP.

Belongs to the class-I aminoacyl-tRNA synthetase family.

Its subcellular location is the cytoplasm. It carries out the reaction tRNA(Leu) + L-leucine + ATP = L-leucyl-tRNA(Leu) + AMP + diphosphate. This chain is Leucine--tRNA ligase, found in Paramagnetospirillum magneticum (strain ATCC 700264 / AMB-1) (Magnetospirillum magneticum).